The sequence spans 206 residues: Imidazoleglycerol-phosphate dehydratase (206 aa).

Residues 1–21 are disordered; that stretch reads MTALDSSRLLQPRTASVHRRT.

Belongs to the imidazoleglycerol-phosphate dehydratase family.

The protein localises to the cytoplasm. The enzyme catalyses D-erythro-1-(imidazol-4-yl)glycerol 3-phosphate = 3-(imidazol-4-yl)-2-oxopropyl phosphate + H2O. It participates in amino-acid biosynthesis; L-histidine biosynthesis; L-histidine from 5-phospho-alpha-D-ribose 1-diphosphate: step 6/9. This chain is Imidazoleglycerol-phosphate dehydratase, found in Synechococcus sp. (strain JA-2-3B'a(2-13)) (Cyanobacteria bacterium Yellowstone B-Prime).